The chain runs to 213 residues: 3-oxoadipate CoA-transferase subunit B (213 aa).

Glutamate 50 is a catalytic residue.

The protein belongs to the 3-oxoacid CoA-transferase subunit B family. In terms of assembly, heterodimer.

The catalysed reaction is 3-oxoadipate + succinyl-CoA = 3-oxoadipyl-CoA + succinate. It participates in aromatic compound metabolism; beta-ketoadipate pathway; acetyl-CoA and succinyl-CoA from 3-oxoadipate: step 1/2. This is 3-oxoadipate CoA-transferase subunit B (pcaJ) from Pseudomonas putida (strain ATCC 47054 / DSM 6125 / CFBP 8728 / NCIMB 11950 / KT2440).